The primary structure comprises 810 residues: Volume-regulated anion channel subunit LRRC8A (810 aa).

Residue M1 is modified to N-acetylmethionine. The Cytoplasmic segment spans residues M1–P22. Residues W23–V47 traverse the membrane as a helical segment. Residues T48–K123 lie on the Extracellular side of the membrane. Disulfide bonds link C54-C310, C57-C65, and C113-C295. N-linked (GlcNAc...) asparagine glycans are attached at residues N66 and N83. The helical transmembrane segment at Y124–F142 threads the bilayer. The Cytoplasmic segment spans residues W143 to Y264. Position 200 is a phosphothreonine (T200). A Phosphoserine modification is found at S202. Residue T215 is modified to Phosphothreonine. Residue S217 is modified to Phosphoserine. The chain crosses the membrane as a helical span at residues M265–V286. The Extracellular segment spans residues H287–T316. The chain crosses the membrane as a helical span at residues L317 to W341. The Cytoplasmic segment spans residues W342 to A810. LRR repeat units follow at residues W411–K422, N423–L445, E447–L468, T469–R492, E493–L515, L518–E542, L543–V565, V567–K589, M590–L613, H614–H637, H639–L661, T662–C684, K686–L707, Q708–C730, K732–L753, T754–C776, and L778–R801. Positions L706–L707 match the Di-leucine motif motif.

It belongs to the LRRC8 family. As to quaternary structure, heterohexamer; oligomerizes with other LRRC8 proteins (LRRC8B, LRRC8C, LRRC8D and/or LRRC8E) to form a heterohexamer. Can form homohexamers in vitro, but these have lower conductance than heterohexamers. In vivo, the subunit composition may depend primarily on expression levels, and heterooligomeric channels containing various proportions of the different LRRC8 proteins may coexist. Interact with GRB2. Interacts with NOX4; this interaction prevents the ubiquitin-mediated degradation of LRRC8A. N-glycosylated. As to expression, ubiquitously expressed. High levels detected in the bone marrow; lower levels found in peripheral blood cells. Highly expressed in pancreatic beta cells.

The protein localises to the cell membrane. The protein resides in the lysosome membrane. The catalysed reaction is chloride(in) = chloride(out). It catalyses the reaction iodide(out) = iodide(in). It carries out the reaction taurine(out) = taurine(in). The enzyme catalyses L-aspartate(out) = L-aspartate(in). The catalysed reaction is L-glutamate(out) = L-glutamate(in). It catalyses the reaction myo-inositol(out) = myo-inositol(in). It carries out the reaction 2',3'-cGAMP(out) = 2',3'-cGAMP(in). With respect to regulation, inhibited by (4-[(2-butyl-6,7-dichloro-2-cyclopentyl-2,3-dihydro-1-oxo-1H-inden-5-yl)oxy]butanoic acid), which plugs the channel like a cork in a bottle by binding in the extracellular selectivity filter and sterically occluding ion conduction. Lipids may block conduction in closed heterohexameric channels. In terms of biological role, essential component of the volume-regulated anion channel (VRAC, also named VSOAC channel), an anion channel required to maintain a constant cell volume in response to extracellular or intracellular osmotic changes. The VRAC channel conducts iodide better than chloride and can also conduct organic osmolytes like taurine. Mediates efflux of amino acids, such as aspartate and glutamate, in response to osmotic stress. In complex with LRRC8C or LRRC8E, acts as a transporter of immunoreactive cyclic dinucleotide GMP-AMP (2'-3'-cGAMP), an immune messenger produced in response to DNA virus in the cytosol: mediates both import and export of 2'-3'-cGAMP, thereby promoting transfer of 2'-3'-cGAMP to bystander cells. In contrast, complexes containing LRRC8D inhibit transport of 2'-3'-cGAMP. Required for in vivo channel activity, together with at least one other family member (LRRC8B, LRRC8C, LRRC8D or LRRC8E); channel characteristics depend on the precise subunit composition. Can form functional channels by itself (in vitro). Involved in B-cell development: required for the pro-B cell to pre-B cell transition. Also required for T-cell development. Required for myoblast differentiation: VRAC activity promotes membrane hyperpolarization and regulates insulin-stimulated glucose metabolism and oxygen consumption. Also acts as a regulator of glucose-sensing in pancreatic beta cells: VRAC currents, generated in response to hypotonicity- or glucose-induced beta cell swelling, depolarize cells, thereby causing electrical excitation, leading to increase glucose sensitivity and insulin secretion. Also plays a role in lysosome homeostasis by forming functional lysosomal VRAC channels in response to low cytoplasmic ionic strength condition: lysosomal VRAC channels are necessary for the formation of large lysosome-derived vacuoles, which store and then expel excess water to maintain cytosolic water homeostasis. Acts as a key factor in NLRP3 inflammasome activation by modulating itaconate efflux and mitochondria function. The polypeptide is Volume-regulated anion channel subunit LRRC8A (Mus musculus (Mouse)).